A 181-amino-acid chain; its full sequence is Large ribosomal subunit protein uL5 (181 aa).

The protein belongs to the universal ribosomal protein uL5 family. As to quaternary structure, part of the 50S ribosomal subunit; contacts the 5S rRNA and probably tRNA. Forms a bridge to the 30S subunit in the 70S ribosome.

In terms of biological role, this is one of the proteins that bind and probably mediate the attachment of the 5S RNA into the large ribosomal subunit, where it forms part of the central protuberance. In the 70S ribosome it contacts protein S13 of the 30S subunit (bridge B1b), connecting the 2 subunits; this bridge is implicated in subunit movement. May contact the P site tRNA; the 5S rRNA and some of its associated proteins might help stabilize positioning of ribosome-bound tRNAs. In Methanococcus vannielii, this protein is Large ribosomal subunit protein uL5.